We begin with the raw amino-acid sequence, 401 residues long: Phosphoglycerate kinase (401 aa).

Substrate is bound by residues 20–22, arginine 35, 58–61, arginine 117, and arginine 154; these read DFN and HLGR. ATP is bound by residues lysine 204, glycine 298, glutamate 329, and 358-361; that span reads GGDS.

Belongs to the phosphoglycerate kinase family. As to quaternary structure, monomer.

The protein localises to the cytoplasm. It carries out the reaction (2R)-3-phosphoglycerate + ATP = (2R)-3-phospho-glyceroyl phosphate + ADP. The protein operates within carbohydrate degradation; glycolysis; pyruvate from D-glyceraldehyde 3-phosphate: step 2/5. The polypeptide is Phosphoglycerate kinase (Bifidobacterium longum subsp. infantis (strain ATCC 15697 / DSM 20088 / JCM 1222 / NCTC 11817 / S12)).